The chain runs to 160 residues: MSDEEHHFESKADAGASKTYPQQAGTIRKSGYIVIKGRPCKVVEVSTSKTGKHGHAKCHFVAIDIFNGKKLEDIVPSSHNCDVPHVNRTDYQLIDISEDGFVSLLTENGNTKDDLRLPTDDALLNQVKGGFEEGKDLVLSVMSAMGEEQICAVKDIGTKS.

Residues 1–12 show a composition bias toward basic and acidic residues; sequence MSDEEHHFESKA. The tract at residues 1 to 21 is disordered; sequence MSDEEHHFESKADAGASKTYP. K52 is subject to Hypusine.

It belongs to the eIF-5A family. Post-translationally, lys-52 undergoes hypusination, a unique post-translational modification that consists in the addition of a butylamino group from spermidine to lysine side chain, leading to the formation of the unusual amino acid hypusine. eIF-5As are the only known proteins to undergo this modification, which is essential for their function.

In terms of biological role, translation factor that promotes translation elongation and termination, particularly upon ribosome stalling at specific amino acid sequence contexts. Binds between the exit (E) and peptidyl (P) site of the ribosome and promotes rescue of stalled ribosome: specifically required for efficient translation of polyproline-containing peptides as well as other motifs that stall the ribosome. Acts as a ribosome quality control (RQC) cofactor by joining the RQC complex to facilitate peptidyl transfer during CAT tailing step. In Solanum tuberosum (Potato), this protein is Eukaryotic translation initiation factor 5A-1/2 (EIF5A1).